The chain runs to 232 residues: Putative ABC transporter ATP-binding protein VNG_2317G (232 aa).

Residues 2–231 (LSVRNLVHRY…GALPDAGVRP (230 aa)) form the ABC transporter domain. 34–41 (GANGSGKT) is a binding site for ATP.

This sequence belongs to the ABC transporter superfamily.

Its subcellular location is the cell membrane. Its function is as follows. Probably part of an ABC transporter complex. Responsible for energy coupling to the transport system. This chain is Putative ABC transporter ATP-binding protein VNG_2317G, found in Halobacterium salinarum (strain ATCC 700922 / JCM 11081 / NRC-1) (Halobacterium halobium).